Reading from the N-terminus, the 262-residue chain is Phosphonates import ATP-binding protein PhnC (262 aa).

Positions 5–253 (IRVEKLAKTF…RFDHLYRSIN (249 aa)) constitute an ABC transporter domain. Position 37-44 (37-44 (GPSGSGKS)) interacts with ATP.

It belongs to the ABC transporter superfamily. Phosphonates importer (TC 3.A.1.9.1) family. The complex is composed of two ATP-binding proteins (PhnC), two transmembrane proteins (PhnE) and a solute-binding protein (PhnD).

Its subcellular location is the cell inner membrane. It catalyses the reaction phosphonate(out) + ATP + H2O = phosphonate(in) + ADP + phosphate + H(+). In terms of biological role, part of the ABC transporter complex PhnCDE involved in phosphonates, phosphate esters, phosphite and phosphate import. Responsible for energy coupling to the transport system. This Escherichia coli (strain K12) protein is Phosphonates import ATP-binding protein PhnC.